The primary structure comprises 316 residues: Acetyl-coenzyme A carboxylase carboxyl transferase subunit beta, chloroplastic (316 aa).

Residues Leu-47–Lys-316 form the CoA carboxyltransferase N-terminal domain. Cys-51, Cys-54, Cys-70, and Cys-73 together coordinate Zn(2+). Residues Cys-51 to Cys-73 form a C4-type zinc finger.

Belongs to the AccD/PCCB family. In terms of assembly, acetyl-CoA carboxylase is a heterohexamer composed of biotin carboxyl carrier protein, biotin carboxylase and 2 subunits each of ACCase subunit alpha and ACCase plastid-coded subunit beta (accD). Requires Zn(2+) as cofactor.

The protein resides in the plastid. It localises to the chloroplast stroma. The catalysed reaction is N(6)-carboxybiotinyl-L-lysyl-[protein] + acetyl-CoA = N(6)-biotinyl-L-lysyl-[protein] + malonyl-CoA. Its pathway is lipid metabolism; malonyl-CoA biosynthesis; malonyl-CoA from acetyl-CoA: step 1/1. In terms of biological role, component of the acetyl coenzyme A carboxylase (ACC) complex. Biotin carboxylase (BC) catalyzes the carboxylation of biotin on its carrier protein (BCCP) and then the CO(2) group is transferred by the transcarboxylase to acetyl-CoA to form malonyl-CoA. The polypeptide is Acetyl-coenzyme A carboxylase carboxyl transferase subunit beta, chloroplastic (Marchantia polymorpha (Common liverwort)).